The following is a 555-amino-acid chain: 4-coumarate--CoA ligase-like 9 (555 aa).

ATP-binding residues include S200, S201, G202, T203, T204, and K208. Residue Y248 participates in (E)-4-coumaroyl-AMP binding. R269 serves as a coordination point for CoA. The interval 271 to 342 is SBD1; it reads DLRTFLRALV…RKFPGVQVEE (72 aa). A320 contacts (E)-4-coumaroyl-AMP. Residues E342, A343, T347, D431, and R446 each contribute to the ATP site. (E)-4-coumaroyl-AMP-binding residues include A343 and T347. Positions 343-410 are SBD2; it reads AYGLTEHSCI…VRSQSVMQGY (68 aa). (E)-4-coumaroyl-AMP contacts are provided by K448 and K452. Residues K454 and G455 each contribute to the CoA site. K537 is an ATP binding site.

It belongs to the ATP-dependent AMP-binding enzyme family. Interacts with STS1. Mg(2+) is required as a cofactor.

The catalysed reaction is (E)-4-coumarate + ATP + CoA = (E)-4-coumaroyl-CoA + AMP + diphosphate. The enzyme catalyses (E)-4-coumarate + ATP + H(+) = (E)-4-coumaroyl-AMP + diphosphate. It catalyses the reaction (E)-4-coumaroyl-AMP + CoA = (E)-4-coumaroyl-CoA + AMP + H(+). Functionally, carboxylate--CoA ligase that may use 4-coumarate as substrate. Follows a two-step reaction mechanism, wherein the carboxylate substrate first undergoes adenylation by ATP, followed by a thioesterification in the presence of CoA to yield the final CoA thioester. The sequence is that of 4-coumarate--CoA ligase-like 9 (4CLL9) from Oryza sativa subsp. japonica (Rice).